Reading from the N-terminus, the 160-residue chain is Cytochrome b6-f complex subunit 4 (160 aa).

3 helical membrane-spanning segments follow: residues 36–56 (LLYIFPVVILGTIACNVGLAV), 95–115 (LLGVLLMVSVPTGLLTVPFLE), and 131–151 (TVFLIGTAVALWLGIGATLPI).

This sequence belongs to the cytochrome b family. PetD subfamily. In terms of assembly, the 4 large subunits of the cytochrome b6-f complex are cytochrome b6, subunit IV (17 kDa polypeptide, petD), cytochrome f and the Rieske protein, while the 4 small subunits are petG, petL, petM and petN. The complex functions as a dimer.

It localises to the plastid. The protein resides in the chloroplast thylakoid membrane. Component of the cytochrome b6-f complex, which mediates electron transfer between photosystem II (PSII) and photosystem I (PSI), cyclic electron flow around PSI, and state transitions. This Saccharum hybrid (Sugarcane) protein is Cytochrome b6-f complex subunit 4.